A 485-amino-acid polypeptide reads, in one-letter code: Apolipoprotein N-acyltransferase (485 aa).

6 helical membrane passes run 8-28, 49-69, 76-96, 121-141, 157-177, and 186-206; these read IAGA…IAFV, GWLF…VSIH, VPLA…FIAF, WWVV…WLFL, FGIY…YLLV, and IMCL…TFIP. A CN hydrolase domain is found at 220 to 457; sequence VQGNIGQRLK…RLLLTGQIKP (238 aa). Glu-259 functions as the Proton acceptor in the catalytic mechanism. Lys-317 is an active-site residue. Residue Cys-369 is the Nucleophile of the active site. A helical transmembrane segment spans residues 464–484; the sequence is LMRWNYYPVVGIIIIFLLLTF.

The protein belongs to the CN hydrolase family. Apolipoprotein N-acyltransferase subfamily.

The protein resides in the cell inner membrane. The catalysed reaction is N-terminal S-1,2-diacyl-sn-glyceryl-L-cysteinyl-[lipoprotein] + a glycerophospholipid = N-acyl-S-1,2-diacyl-sn-glyceryl-L-cysteinyl-[lipoprotein] + a 2-acyl-sn-glycero-3-phospholipid + H(+). It functions in the pathway protein modification; lipoprotein biosynthesis (N-acyl transfer). Functionally, catalyzes the phospholipid dependent N-acylation of the N-terminal cysteine of apolipoprotein, the last step in lipoprotein maturation. The protein is Apolipoprotein N-acyltransferase of Coxiella burnetii (strain RSA 493 / Nine Mile phase I).